We begin with the raw amino-acid sequence, 215 residues long: Pyrrolidone-carboxylate peptidase (215 aa).

Residues glutamate 78, cysteine 141, and histidine 165 contribute to the active site.

It belongs to the peptidase C15 family. As to quaternary structure, homotetramer.

It is found in the cytoplasm. The enzyme catalyses Release of an N-terminal pyroglutamyl group from a polypeptide, the second amino acid generally not being Pro.. Functionally, removes 5-oxoproline from various penultimate amino acid residues except L-proline. This is Pyrrolidone-carboxylate peptidase from Streptococcus pyogenes serotype M3 (strain SSI-1).